Consider the following 353-residue polypeptide: Guanidino acid hydrolase, mitochondrial (353 aa).

The transit peptide at 1 to 33 (MLQLLKSSWVRSAGSGVVTWRASAGLFCPGTRQ) directs the protein to the mitochondrion. A disordered region spans residues 29 to 52 (PGTRQASDTSDTLHHPSPSSESQV). Residues His-163 and His-188 each contribute to the Mn(2+) site. An N6-acetyllysine modification is found at Lys-194. Lys-218 bears the N6-acetyllysine; alternate mark. An N6-succinyllysine; alternate modification is found at Lys-218. Mn(2+) is bound at residue Asp-279.

Belongs to the arginase family. Agmatinase subfamily. Mn(2+) serves as cofactor.

Its subcellular location is the mitochondrion. The enzyme catalyses 3-guanidinopropanoate + H2O = urea + beta-alanine. The catalysed reaction is 4-guanidinobutanoate + H2O = urea + 4-aminobutanoate. It catalyses the reaction taurocyamine + H2O = urea + taurine. It carries out the reaction L-arginine + H2O = urea + L-ornithine. The protein operates within nitrogen metabolism; urea cycle; L-ornithine and urea from L-arginine: step 1/1. In terms of biological role, hydrolyzes linear guanidino acids to form urea and the corresponding amines. Displays specificity for substrates having a negatively charged head group and short chains including taurocyamine, guanidino propanoic and butanoic acids. May protect cells by detoxifying potentially harmful amounts of guanidino acids. Metabolizes L-arginine with low efficiency. The sequence is that of Guanidino acid hydrolase, mitochondrial (Agmat) from Rattus norvegicus (Rat).